A 420-amino-acid polypeptide reads, in one-letter code: Tyrosine-protein phosphatase non-receptor type 20 (420 aa).

The segment covering 1–11 (MSSPRDFRAEP) has biased composition (basic and acidic residues). Disordered regions lie at residues 1–47 (MSSP…VFEN) and 68–108 (DVFE…SQAL). A compositionally biased stretch (polar residues) spans 31 to 41 (LPSSSQENTPR). A phosphoserine mark is found at Ser-76 and Ser-120. One can recognise a Tyrosine-protein phosphatase domain in the interval 159–412 (IMQEFMALEL…HFCYDIVLEV (254 aa)). Substrate is bound by residues Asp-323, 353-359 (CSAGIGR), and Gln-397. The Phosphocysteine intermediate role is filled by Cys-353.

The protein belongs to the protein-tyrosine phosphatase family. Non-receptor class subfamily. In terms of tissue distribution, present in many cell lines (at protein level). Widely expressed.

It localises to the nucleus. It is found in the cytoplasm. Its subcellular location is the cytoskeleton. The protein localises to the microtubule organizing center. The protein resides in the centrosome. The catalysed reaction is O-phospho-L-tyrosyl-[protein] + H2O = L-tyrosyl-[protein] + phosphate. Functionally, tyrosine-protein phosphatase targeted to sites of actin polymerization in response of varied extracellular stimuli. Has tyrosine phosphatase activity towards various tyrosyl phosphorylated substrates. In Homo sapiens (Human), this protein is Tyrosine-protein phosphatase non-receptor type 20.